A 150-amino-acid chain; its full sequence is Cytochrome c oxidase subunit 5A, mitochondrial (150 aa).

A mitochondrion-targeting transit peptide spans 1–41 (MLGAALRRCAVAAAARAGPRGLLHSAPTPGPAAAIQSVRCY). Positions 2–17 (LGAALRRCAVAAAARA) match the SIFI-degron motif. N6-acetyllysine is present on residues Lys87 and Lys113. Residue Thr141 is modified to Phosphothreonine.

The protein belongs to the cytochrome c oxidase subunit 5A family. As to quaternary structure, component of the cytochrome c oxidase (complex IV, CIV), a multisubunit enzyme composed of 14 subunits. The complex is composed of a catalytic core of 3 subunits MT-CO1, MT-CO2 and MT-CO3, encoded in the mitochondrial DNA, and 11 supernumerary subunits COX4I, COX5A, COX5B, COX6A, COX6B, COX6C, COX7A, COX7B, COX7C, COX8 and NDUFA4, which are encoded in the nuclear genome. The complex exists as a monomer or a dimer and forms supercomplexes (SCs) in the inner mitochondrial membrane with NADH-ubiquinone oxidoreductase (complex I, CI) and ubiquinol-cytochrome c oxidoreductase (cytochrome b-c1 complex, complex III, CIII), resulting in different assemblies (supercomplex SCI(1)III(2)IV(1) and megacomplex MCI(2)III(2)IV(2)). Interacts with AFG1L. Interacts with RAB5IF. Post-translationally, in response to mitochondrial stress, the precursor protein is ubiquitinated by the SIFI complex in the cytoplasm before mitochondrial import, leading to its degradation. Within the SIFI complex, UBR4 initiates ubiquitin chain that are further elongated or branched by KCMF1.

Its subcellular location is the mitochondrion inner membrane. It participates in energy metabolism; oxidative phosphorylation. Its function is as follows. Component of the cytochrome c oxidase, the last enzyme in the mitochondrial electron transport chain which drives oxidative phosphorylation. The respiratory chain contains 3 multisubunit complexes succinate dehydrogenase (complex II, CII), ubiquinol-cytochrome c oxidoreductase (cytochrome b-c1 complex, complex III, CIII) and cytochrome c oxidase (complex IV, CIV), that cooperate to transfer electrons derived from NADH and succinate to molecular oxygen, creating an electrochemical gradient over the inner membrane that drives transmembrane transport and the ATP synthase. Cytochrome c oxidase is the component of the respiratory chain that catalyzes the reduction of oxygen to water. Electrons originating from reduced cytochrome c in the intermembrane space (IMS) are transferred via the dinuclear copper A center (CU(A)) of subunit 2 and heme A of subunit 1 to the active site in subunit 1, a binuclear center (BNC) formed by heme A3 and copper B (CU(B)). The BNC reduces molecular oxygen to 2 water molecules using 4 electrons from cytochrome c in the IMS and 4 protons from the mitochondrial matrix. The chain is Cytochrome c oxidase subunit 5A, mitochondrial (COX5A) from Plecturocebus donacophilus (Bolivian gray titi monkey).